The primary structure comprises 424 residues: Histidine--tRNA ligase (424 aa).

Belongs to the class-II aminoacyl-tRNA synthetase family. In terms of assembly, homodimer.

The protein localises to the cytoplasm. The catalysed reaction is tRNA(His) + L-histidine + ATP = L-histidyl-tRNA(His) + AMP + diphosphate + H(+). In Shewanella woodyi (strain ATCC 51908 / MS32), this protein is Histidine--tRNA ligase.